The sequence spans 138 residues: Large ribosomal subunit protein uL16 (138 aa).

Over residues 1–18 (MALMPKRVKHRKSQRGRI) the composition is skewed to basic residues. Residues 1-21 (MALMPKRVKHRKSQRGRIKGN) are disordered.

It belongs to the universal ribosomal protein uL16 family. Part of the 50S ribosomal subunit.

In terms of biological role, binds 23S rRNA and is also seen to make contacts with the A and possibly P site tRNAs. This chain is Large ribosomal subunit protein uL16, found in Rhodopirellula baltica (strain DSM 10527 / NCIMB 13988 / SH1).